The sequence spans 744 residues: Probable methylmalonyl-CoA mutase, mitochondrial (744 aa).

One can recognise a B12-binding domain in the interval 605 to 737; sequence QPRIMVAKMG…EKLEANLPEA (133 aa). Position 618 (H618) interacts with adenosylcob(III)alamin.

This sequence belongs to the methylmalonyl-CoA mutase family. Homodimer. It depends on adenosylcob(III)alamin as a cofactor.

The protein localises to the mitochondrion matrix. The catalysed reaction is (R)-methylmalonyl-CoA = succinyl-CoA. In terms of biological role, involved, in man, in the degradation of several amino acids, odd-chain fatty acids and cholesterol via propionyl-CoA to the tricarboxylic acid cycle. MCM has different functions in other species. The chain is Probable methylmalonyl-CoA mutase, mitochondrial (mmcm-1) from Caenorhabditis elegans.